The chain runs to 317 residues: Lipoyl synthase (317 aa).

[4Fe-4S] cluster-binding residues include Cys59, Cys64, Cys70, Cys85, Cys89, Cys92, and Ser298. The Radical SAM core domain maps to 71-287 (WSQRHASFMI…AKIGKAKGFL (217 aa)).

It belongs to the radical SAM superfamily. Lipoyl synthase family. Requires [4Fe-4S] cluster as cofactor.

Its subcellular location is the cytoplasm. It catalyses the reaction [[Fe-S] cluster scaffold protein carrying a second [4Fe-4S](2+) cluster] + N(6)-octanoyl-L-lysyl-[protein] + 2 oxidized [2Fe-2S]-[ferredoxin] + 2 S-adenosyl-L-methionine + 4 H(+) = [[Fe-S] cluster scaffold protein] + N(6)-[(R)-dihydrolipoyl]-L-lysyl-[protein] + 4 Fe(3+) + 2 hydrogen sulfide + 2 5'-deoxyadenosine + 2 L-methionine + 2 reduced [2Fe-2S]-[ferredoxin]. It participates in protein modification; protein lipoylation via endogenous pathway; protein N(6)-(lipoyl)lysine from octanoyl-[acyl-carrier-protein]: step 2/2. In terms of biological role, catalyzes the radical-mediated insertion of two sulfur atoms into the C-6 and C-8 positions of the octanoyl moiety bound to the lipoyl domains of lipoate-dependent enzymes, thereby converting the octanoylated domains into lipoylated derivatives. The polypeptide is Lipoyl synthase (Bartonella bacilliformis (strain ATCC 35685 / KC583 / Herrer 020/F12,63)).